The following is a 313-amino-acid chain: Biotin synthase (313 aa).

In terms of domain architecture, Radical SAM core spans Tyr37 to Ala263. [4Fe-4S] cluster contacts are provided by Cys55, Cys59, and Cys62. [2Fe-2S] cluster is bound by residues Cys98, Cys131, Cys191, and Arg261.

This sequence belongs to the radical SAM superfamily. Biotin synthase family. Homodimer. The cofactor is [4Fe-4S] cluster. It depends on [2Fe-2S] cluster as a cofactor.

It carries out the reaction (4R,5S)-dethiobiotin + (sulfur carrier)-SH + 2 reduced [2Fe-2S]-[ferredoxin] + 2 S-adenosyl-L-methionine = (sulfur carrier)-H + biotin + 2 5'-deoxyadenosine + 2 L-methionine + 2 oxidized [2Fe-2S]-[ferredoxin]. It functions in the pathway cofactor biosynthesis; biotin biosynthesis; biotin from 7,8-diaminononanoate: step 2/2. Functionally, catalyzes the conversion of dethiobiotin (DTB) to biotin by the insertion of a sulfur atom into dethiobiotin via a radical-based mechanism. The protein is Biotin synthase of Staphylococcus epidermidis (strain ATCC 12228 / FDA PCI 1200).